The primary structure comprises 921 residues: Levanase (921 aa).

The signal sequence occupies residues 1 to 23; sequence MMKWFAKLILSLSLAVVMAASSA. Residues 409-412, Gln428, 460-461, 539-540, Glu591, and Trp679 each bind substrate; these read SASD, WS, and RD. The active site involves Asp412.

Belongs to the glycosyl hydrolase 32 family.

It is found in the secreted. The enzyme catalyses Random hydrolysis of (2-&gt;6)-beta-D-fructofuranosidic linkages in (2-&gt;6)-beta-D-fructans (levans) containing more than 3 fructose units.. Its activity is regulated as follows. Is completely inhibited by low concentrations of heavy metal ions, while Ca(2+) and Mg(2+) or chelating agents such as EDTA neither inhibit nor activate the enzyme to any significant extent. Functionally, catalyzes the hydrolysis of levan with endo-type specificity. The products of levan hydrolysis are a mixture of fructose and a series of fructooligosaccharides up to 12-mer, with levantriose being the major oligosaccharide obtained. Is not active towards sucrose. In Bacillus sp. (strain L7), this protein is Levanase.